We begin with the raw amino-acid sequence, 112 residues long: uncharacterized protein (112 aa).

Positions Met-1–Thr-27 are disordered.

This is an uncharacterized protein from Orgyia pseudotsugata multicapsid polyhedrosis virus (OpMNPV).